Reading from the N-terminus, the 111-residue chain is HTH-type transcriptional regulator SinR (111 aa).

Residues 6–61 (IKQYRKEKGYSLSELAEKAGVAKSYLSSIERNLQTNPSIQFLEKVSAVLDVSVHTL) form the HTH cro/C1-type domain. The segment at residues 17-36 (LSELAEKAGVAKSYLSSIER) is a DNA-binding region (H-T-H motif). Residues 65 to 103 (KHETEYDGQLDSEWEKLVRDAMTSGVSKKQFREFLDYQK) enclose the Sin domain.

As to quaternary structure, homotetramer in the absence of SinI. Heterodimer with SinI. Interaction with SinI disrupts the SinR tetramer and its repressor activity. Interacts with hpr.

Its function is as follows. Negative as well as positive regulator of alternate developmental processes that are induced at the end of vegetative growth in response to nutrient depletion. Binds to the alkaline protease (aprE) gene at two sites. Also acts as a repressor of the key sporulation gene spo0A. Negatively regulates transcription of the eps operon, which is responsible for the biosynthesis of an exopolysaccharide involved in biofilm formation; therefore it could govern the transition between a state in which bacteria swim or swarm and a state in which bacteria assemble into multicellular communities. Acts with Hpr as a corepressor of epr expression. Also negatively regulates transcription of the lutABC operon, which is required for lactate utilization. Repressor activity is regulated by SinI. This is HTH-type transcriptional regulator SinR (sinR) from Bacillus subtilis (strain 168).